Reading from the N-terminus, the 585-residue chain is Glutamate decarboxylase 2 (585 aa).

Residues 1-24 (MASPGSGFWSFGSEDGSGDPENSG) form a disordered region. Residues Ser3, Ser6, Ser10, and Ser13 each carry the phosphoserine modification. S-palmitoyl cysteine attachment occurs at residues Cys30 and Cys45. 181 to 183 (QLS) is a binding site for substrate. Lys396 carries the N6-(pyridoxal phosphate)lysine modification. Arg558 lines the substrate pocket.

Belongs to the group II decarboxylase family. Homodimer. Pyridoxal 5'-phosphate serves as cofactor. Post-translationally, phosphorylated; which does not affect kinetic parameters or subcellular location. Palmitoylated; which is required for presynaptic clustering.

It localises to the cytoplasm. The protein localises to the cytosol. The protein resides in the cytoplasmic vesicle. It is found in the presynaptic cell membrane. Its subcellular location is the golgi apparatus membrane. The enzyme catalyses L-glutamate + H(+) = 4-aminobutanoate + CO2. Catalyzes the production of GABA. This Sus scrofa (Pig) protein is Glutamate decarboxylase 2 (GAD2).